Reading from the N-terminus, the 158-residue chain is Phosphopantetheine adenylyltransferase (158 aa).

Thr-9 contacts substrate. ATP-binding positions include 9–10 (TF) and His-17. Residues Lys-41, Leu-73, and Arg-87 each contribute to the substrate site. Residues 88-90 (GVR), Glu-98, and 123-129 (WSYVSST) each bind ATP.

Belongs to the bacterial CoaD family. In terms of assembly, homohexamer. Requires Mg(2+) as cofactor.

The protein localises to the cytoplasm. It catalyses the reaction (R)-4'-phosphopantetheine + ATP + H(+) = 3'-dephospho-CoA + diphosphate. It functions in the pathway cofactor biosynthesis; coenzyme A biosynthesis; CoA from (R)-pantothenate: step 4/5. Functionally, reversibly transfers an adenylyl group from ATP to 4'-phosphopantetheine, yielding dephospho-CoA (dPCoA) and pyrophosphate. The chain is Phosphopantetheine adenylyltransferase from Pasteurella multocida (strain Pm70).